Reading from the N-terminus, the 497-residue chain is Guanosine-5'-triphosphate,3'-diphosphate pyrophosphatase (497 aa).

Belongs to the GppA/Ppx family. GppA subfamily.

The enzyme catalyses guanosine 3'-diphosphate 5'-triphosphate + H2O = guanosine 3',5'-bis(diphosphate) + phosphate + H(+). Its pathway is purine metabolism; ppGpp biosynthesis; ppGpp from GTP: step 2/2. In terms of biological role, catalyzes the conversion of pppGpp to ppGpp. Guanosine pentaphosphate (pppGpp) is a cytoplasmic signaling molecule which together with ppGpp controls the 'stringent response', an adaptive process that allows bacteria to respond to amino acid starvation, resulting in the coordinated regulation of numerous cellular activities. The sequence is that of Guanosine-5'-triphosphate,3'-diphosphate pyrophosphatase from Aliivibrio fischeri (strain MJ11) (Vibrio fischeri).